The following is a 165-amino-acid chain: Crossover junction endodeoxyribonuclease RuvC (165 aa).

Residues Asp-7, Glu-67, and Asp-140 contribute to the active site. Residues Asp-7, Glu-67, and Asp-140 each coordinate Mg(2+).

The protein belongs to the RuvC family. In terms of assembly, homodimer which binds Holliday junction (HJ) DNA. The HJ becomes 2-fold symmetrical on binding to RuvC with unstacked arms; it has a different conformation from HJ DNA in complex with RuvA. In the full resolvosome a probable DNA-RuvA(4)-RuvB(12)-RuvC(2) complex forms which resolves the HJ. It depends on Mg(2+) as a cofactor.

Its subcellular location is the cytoplasm. It catalyses the reaction Endonucleolytic cleavage at a junction such as a reciprocal single-stranded crossover between two homologous DNA duplexes (Holliday junction).. In terms of biological role, the RuvA-RuvB-RuvC complex processes Holliday junction (HJ) DNA during genetic recombination and DNA repair. Endonuclease that resolves HJ intermediates. Cleaves cruciform DNA by making single-stranded nicks across the HJ at symmetrical positions within the homologous arms, yielding a 5'-phosphate and a 3'-hydroxyl group; requires a central core of homology in the junction. The consensus cleavage sequence is 5'-(A/T)TT(C/G)-3'. Cleavage occurs on the 3'-side of the TT dinucleotide at the point of strand exchange. HJ branch migration catalyzed by RuvA-RuvB allows RuvC to scan DNA until it finds its consensus sequence, where it cleaves and resolves the cruciform DNA. The protein is Crossover junction endodeoxyribonuclease RuvC of Halothermothrix orenii (strain H 168 / OCM 544 / DSM 9562).